Reading from the N-terminus, the 117-residue chain is Transcription elongation factor SPT4 (117 aa).

Positions 1 to 40 are interaction with SUPT5H; that stretch reads MSLETVPKDLRHLRACLLCSLVKTIDQFEYDGCDNCESYL. Residues 16-36 form a C4-type zinc finger; that stretch reads CLLCSLVKTIDQFEYDGCDNC.

Belongs to the SPT4 family. Interacts with SUPT5H to form the DSIF complex. DSIF interacts with RNA polymerase II and with the positive transcription elongation factor b complex (P-TEFb complex), which is composed of CDK9 and cyclin-T.

The protein resides in the nucleus. Its function is as follows. May function as a component of the DRB sensitivity-inducing factor complex (DSIF complex), which regulates transcription elongation by RNA polymerase II. Probably enhances transcriptional pausing at sites proximal to the promoter, which may facilitate the assembly of an elongation competent RNA polymerase II complex. Also acts to stimulate transcriptional elongation at low nucleotide concentrations. Regulation of transcriptional elongation by this protein is required for the expression of genes which control neuronal development. The chain is Transcription elongation factor SPT4 (supt4h1) from Danio rerio (Zebrafish).